The chain runs to 410 residues: Tegument protein VP16 homolog (410 aa).

Residues 388–410 form a disordered region; the sequence is PPSPSEILPGDPPRPPTCGFLTR.

The protein belongs to the herpesviridae tegument protein VP16 protein family. In terms of assembly, associates with the VP16-induced complex; binding to host HCFC1 activates VP16 for association with the octamer motif-binding host protein POU2F1, to form a multiprotein-DNA complex responsible for activating transcription of the viral immediate early genes.

It is found in the virion tegument. It localises to the host nucleus. Functionally, transcriptional activator of immediate-early (IE) gene products (alpha genes). Acts as a key activator of lytic infection by initiating the lytic program through the assembly of the transcriptional regulatory VP16-induced complex composed of VP16 and two cellular factors, HCFC1 and POU2F 1. VP16-induced complex represents a regulatory switch: when it is on, it promotes IE-gene expression and thus lytic infection, and when it is off, it limits IE-gene transcription favoring latent infection. In terms of biological role, may play a role in the aggregation of tegument proteins around nucleocapsids during virus morphogenesis. This Varicella-zoster virus (strain Oka vaccine) (HHV-3) protein is Tegument protein VP16 homolog.